The chain runs to 439 residues: Acyl-lipid (8-3)-desaturase (439 aa).

Residues 7–88 enclose the Cytochrome b5 heme-binding domain; the sequence is GRSAAREMTA…LPKLDASKVE (82 aa). Heme contacts are provided by His-40 and His-66. A helical transmembrane segment spans residues 123–143; that stretch reads IPHMIYRVVEIVALFALSFWL. Positions 171–175 match the Histidine box-1 motif; sequence HEMGH. The Histidine box-2 motif lies at 208–213; that stretch reads HSKHHA. A run of 3 helical transmembrane segments spans residues 254 to 274, 287 to 307, and 312 to 332; these read AYLF…LYLH, FVWI…LGYS, and VGMY…QFAV. The Histidine box-3 signature appears at 376-380; the sequence is QIEHH.

The protein belongs to the fatty acid desaturase type 1 family. Requires Fe(2+) as cofactor.

Its subcellular location is the membrane. The catalysed reaction is an (8Z,11Z,14Z)-icosatrienoyl-containing glycerolipid + 2 Fe(II)-[cytochrome b5] + O2 + 2 H(+) = (5Z,8Z,11Z,14Z)-eicosatetraenoyl-containing glycerolipid + 2 Fe(III)-[cytochrome b5] + 2 H2O. It catalyses the reaction an (8Z,11Z,14Z,17Z)-eicosatetraenoyl-containing glycerolipid + 2 Fe(II)-[cytochrome b5] + O2 + 2 H(+) = a (5Z,8Z,11Z,14Z,17Z)-eicosapentaenoyl-containing glycerolipid + 2 Fe(III)-[cytochrome b5] + 2 H2O. Functionally, fatty acid desaturase that introduces a cis double bond at the 5-position in 20-carbon polyunsaturated fatty acids incorporated in a glycerolipid that contain a Delta(8) double bond. The polypeptide is Acyl-lipid (8-3)-desaturase (Thraustochytrium sp).